Consider the following 301-residue polypeptide: 5'-3' exonuclease (301 aa).

The 83-residue stretch at 182 to 264 folds into the 5'-3' exonuclease domain; it reads GYADLALLRG…RVAADVPLPD (83 aa).

In terms of biological role, 5'-3' exonuclease acting preferentially on double-stranded DNA. In Streptomyces coelicolor (strain ATCC BAA-471 / A3(2) / M145), this protein is 5'-3' exonuclease.